We begin with the raw amino-acid sequence, 155 residues long: Ribosome maturation factor RimP (155 aa).

The protein belongs to the RimP family.

It is found in the cytoplasm. Required for maturation of 30S ribosomal subunits. In Agathobacter rectalis (strain ATCC 33656 / DSM 3377 / JCM 17463 / KCTC 5835 / VPI 0990) (Eubacterium rectale), this protein is Ribosome maturation factor RimP.